Consider the following 676-residue polypeptide: RNA helicase NPH-II (676 aa).

The Helicase ATP-binding domain maps to 172-347; sequence FLAWISHRPV…IFLPNPAFIH (176 aa). An ATP-binding site is contributed by 185-192; the sequence is GGTGVGKT. The DEXH box motif lies at 296 to 299; the sequence is DEVH. A Helicase C-terminal domain is found at 366-535; sequence NPSSRMAYIE…NYILYANKFN (170 aa).

This sequence belongs to the DEAD box helicase family. DEAH subfamily. In terms of assembly, monomer.

Its subcellular location is the virion. The catalysed reaction is ATP + H2O = ADP + phosphate + H(+). Its function is as follows. NTP-dependent helicase that catalyzes unidirectional unwinding of 3'tailed duplex RNAs and plays an important role during transcription of early mRNAs, presumably by preventing R-loop formation behind the elongating RNA polymerase. Might also play a role in the export of newly synthesized mRNA chains out of the core into the cytoplasm. Required for replication and propagation of viral particles. This Monkeypox virus protein is RNA helicase NPH-II (OPG084).